Here is a 375-residue protein sequence, read N- to C-terminus: Probable dipeptidase PepE (375 aa).

2 consecutive transmembrane segments (helical) span residues 15–35 (LALA…ITPG) and 55–75 (LVLP…LAAL). Mn(2+)-binding residues include Asp-230, Asp-242, His-306, Glu-335, and Glu-349.

The protein belongs to the peptidase M24B family. It depends on Mn(2+) as a cofactor.

It is found in the cell membrane. The protein is Probable dipeptidase PepE (pepE) of Mycobacterium bovis (strain ATCC BAA-935 / AF2122/97).